The chain runs to 1018 residues: MATTSRRPVLTRTKVLVPVLLVIVLAITIIAIFTRLYTDLLFYRSIDFSRVFTTVLYTRILLFVLFGVVMAIIVGTNIVLAYRLRPPLRPLSTEQQNLERYRSVIEPYMLLILLAVTTLFGLAAGLSAAGQWRTWLLWVNGESFGTPDLQFHRDISYYAFSYPFQRFLLGFLLTAVLLSLLVTLLTHYLFGGIRMQTTGERVTPAAKAHISVLLGLLALLKAWAYYLDRFGSVFSSRGVGTGASYTDVHAVLPAKLILLFISLACAVLFIYNIFQRGWTLPLLGAGILVLSSVVIGGIYPAIVQQFQVRPNEATREEPYIARNIAATRAAYGIQDVEPQDYAASTDVTAQQVAADTGTVPNIRLLDPSKLSRTFQQLQQFRGYYGFPPTLDVDRYTVTGADKKSTTQDYVVSVRELNQAGLGTQQRNWINEHLTYTHGKGFVAAPSNTVDVGRPDFDHGVSGFPQDGTFGIKENRVYFGEMSPSYSIVGTRQMEIDGPGPGETQVTTTYQGDGGVSIGSTFRRALFALRFGEKNILLSGDITKNSRILDERNPRDRVSKAAPWLTLDGDPYPAIVNGRVTWILDGYTTSDGYPYSARRTLGDVTADSVTTQSGNRTRQASNQVNYIRNSVKATVDAYNGTVTLYAWDESDPVLRTWMKAFPDTVKPKSDIPPSLRAHLRYPEDLFKVQRDLIGQYHISNPRDFYSQEDFWDVSDSPDGSGQPQPPFYVYSQLPGRKDPSYNLTSPLISARSSKLAAYMAVSSDPANYGRFTLLKLPAGNTINGPVQVQNAIEGNGDVAKQLSLWRSGGATTIEGNLLTLPLAGGLLYVEPYYVQARGSTGYPTLQGVATAFGDRIGFGASLGEALDKVFGAGAGAAAAGAGIGATTTDAGQDGTPAPRSGQGGAGVPPPGQTALQDAVGDADRAYQAGQDALRKSPPDFTAYGKAQSELADALGRLRTLSSPAATPPAATATRAGASVPASPVPASPAAKPPAPSPSATVAGGDTPGPPGARAAPAPG.

A run of 7 helical transmembrane segments spans residues 13–33 (TKVL…IAIF), 60–80 (ILLF…NIVL), 109–129 (MLLI…LSAA), 167–187 (FLLG…LLTH), 208–228 (AHIS…YYLD), 250–270 (AVLP…VLFI), and 283–303 (LGAG…PAIV). Low complexity-rich tracts occupy residues 886-896 (TTDAGQDGTPA) and 960-980 (SSPA…SVPA). Disordered regions lie at residues 886–920 (TTDA…AVGD) and 960–1018 (SSPA…PAPG). Positions 981–995 (SPVPASPAAKPPAPS) are enriched in pro residues.

The protein belongs to the UPF0182 family.

The protein localises to the cell membrane. In Frankia casuarinae (strain DSM 45818 / CECT 9043 / HFP020203 / CcI3), this protein is UPF0182 protein Francci3_3781.